Consider the following 660-residue polypeptide: Protein SCARECROW 2 (660 aa).

2 disordered regions span residues 1–33 (MGSS…ITSL) and 190–286 (SDPA…KQRD). Pro residues predominate over residues 192 to 229 (PAPPPPPPSHPALLPPDATAPPPPPTSVAALPPPPPAQ). The span at 259–272 (AAAAAAAAAAAAAA) shows a compositional bias: low complexity. Positions 262 to 289 (AAAAAAAAAAAAKERKEEQRRKQRDEEG) form a coiled coil. Residues 273 to 286 (AKERKEEQRRKQRD) show a composition bias toward basic and acidic residues. One can recognise a GRAS domain in the interval 283–653 (KQRDEEGLHL…LCLLTASAWR (371 aa)). The segment at 290-354 (LHLLTLLLQC…VSSCLGLYAP (65 aa)) is leucine repeat I (LRI). Positions 297 to 301 (LQCAE) match the LxCxE motif motif. The VHIID stretch occupies residues 373–438 (FQVFNGISPF…GGPPRVRLTG (66 aa)). A VHIID motif is present at residues 404 to 408 (VHIID). The tract at residues 448 to 480 (ATGKRLSDFADTLGLPFEFCPVADKAGNLDPEK) is leucine repeat II (LRII). A PFYRE region spans residues 489-576 (VAVHWLRHSL…QQLLSREIRN (88 aa)). The tract at residues 579–653 (AVGGPARTGD…LCLLTASAWR (75 aa)) is SAW.

The protein belongs to the GRAS family.

It is found in the cytoplasm. Its function is as follows. Probable transcription factor involved in asmmetric cell division in the cortex/endodermis progenitor cell and in the process of stomata and ligule formation in leaves. In Oryza sativa subsp. indica (Rice), this protein is Protein SCARECROW 2 (SCR2).